The chain runs to 178 residues: Extracellular fatty acid-binding protein (178 aa).

A signal peptide spans 1 to 20; sequence MRTLALSLGLALLCLLHAKA. Residue Thr43 participates in enterobactin binding. 2 residues coordinate 1-tetradecanoyl-sn-glycerol 3-phosphate: Tyr72 and Lys104. Residues Cys80 and Cys173 are joined by a disulfide bond. Lys104, Arg123, and Arg134 together coordinate enterobactin. A 1-tetradecanoyl-sn-glycerol 3-phosphate-binding site is contributed by 134–136; the sequence is RLY.

This sequence belongs to the calycin superfamily. Lipocalin family. As to quaternary structure, monomer.

The protein resides in the secreted. Functionally, siderocalin-like lipocalin tightly binding a variety of bacterial ferric siderophores, also binds long-chain unsaturated fatty acids such as linoleic acid, oleic acid, arachidonic acid and, with a lower affinity, long chain saturated fatty acids such as steraic acid. May act as an antibacterial factor, through dual ligand specificity, both as a siderophore-sequestrating molecule and a lysophosphatidic acid (LPA) sensor. The protein is Extracellular fatty acid-binding protein of Coturnix japonica (Japanese quail).